The sequence spans 286 residues: Shikimate dehydrogenase (NADP(+)) (286 aa).

Shikimate is bound by residues 21–23 (TLS) and Thr68. Lys72 serves as the catalytic Proton acceptor. Residue Glu84 coordinates NADP(+). The shikimate site is built by Asn93 and Asp108. Residues 132 to 136 (GNGGA) and Leu230 each bind NADP(+). Tyr232 serves as a coordination point for shikimate. Gly253 serves as a coordination point for NADP(+).

Belongs to the shikimate dehydrogenase family. Homodimer.

It catalyses the reaction shikimate + NADP(+) = 3-dehydroshikimate + NADPH + H(+). The protein operates within metabolic intermediate biosynthesis; chorismate biosynthesis; chorismate from D-erythrose 4-phosphate and phosphoenolpyruvate: step 4/7. Functionally, involved in the biosynthesis of the chorismate, which leads to the biosynthesis of aromatic amino acids. Catalyzes the reversible NADPH linked reduction of 3-dehydroshikimate (DHSA) to yield shikimate (SA). This chain is Shikimate dehydrogenase (NADP(+)), found in Microcystis aeruginosa (strain NIES-843 / IAM M-2473).